The chain runs to 123 residues: cAMP-responsive element-binding protein-like 2 (123 aa).

Positions methionine 1–isoleucine 24 are disordered. Positions lysine 10–proline 21 are enriched in basic residues. The 64-residue stretch at lysine 23–serine 86 folds into the bZIP domain. Residues lysine 29–arginine 60 are basic motif. Positions isoleucine 62 to leucine 69 are leucine-zipper. A disordered region spans residues threonine 93–asparagine 123. A compositionally biased stretch (polar residues) spans aspartate 114–asparagine 123.

Belongs to the bZIP family. ATF subfamily. As to quaternary structure, interacts with CREB1; regulates CREB1 phosphorylation, stability and transcriptional activity. In terms of processing, phosphorylated by AMPK.

The protein localises to the nucleus. Its function is as follows. Probable regulator of CREB1 transcriptional activity which is involved in adipose cells differentiation. May also play a regulatory role in the cell cycle. The polypeptide is cAMP-responsive element-binding protein-like 2 (Crebl2) (Rattus norvegicus (Rat)).